Consider the following 428-residue polypeptide: Aspartate--tRNA(Asp) ligase (428 aa).

Residue glutamate 166 coordinates L-aspartate. The segment at 188–191 is aspartate; that stretch reads QLYK. An L-aspartate-binding site is contributed by arginine 210. ATP-binding positions include 210–212, 218–220, and glutamate 351; these read RAE and RHL. Mg(2+) is bound by residues glutamate 351 and serine 354. Positions 354 and 358 each coordinate L-aspartate. Position 399–402 (399–402) interacts with ATP; that stretch reads GLER.

It belongs to the class-II aminoacyl-tRNA synthetase family. Type 2 subfamily. In terms of assembly, homodimer. The cofactor is Mg(2+).

The protein localises to the cytoplasm. It catalyses the reaction tRNA(Asp) + L-aspartate + ATP = L-aspartyl-tRNA(Asp) + AMP + diphosphate. Functionally, catalyzes the attachment of L-aspartate to tRNA(Asp) in a two-step reaction: L-aspartate is first activated by ATP to form Asp-AMP and then transferred to the acceptor end of tRNA(Asp). The polypeptide is Aspartate--tRNA(Asp) ligase (Thermoplasma volcanium (strain ATCC 51530 / DSM 4299 / JCM 9571 / NBRC 15438 / GSS1)).